An 86-amino-acid polypeptide reads, in one-letter code: Small muscular protein (86 aa).

Residues 20 to 64 (MGAFRPGAGQPPRRKECTPEVEEGVPPTSDEEKKPIPGAKKLPGP) form a disordered region.

Belongs to the SMPX family.

Plays a role in the regulatory network through which muscle cells coordinate their structural and functional states during growth, adaptation, and repair. This is Small muscular protein (SMPX) from Pongo abelii (Sumatran orangutan).